The sequence spans 176 residues: Protein KleF (176 aa).

This chain is Protein KleF (kleF), found in Escherichia coli.